The sequence spans 270 residues: UPF0354 protein BcerKBAB4_4524 (270 aa).

It belongs to the UPF0354 family.

The polypeptide is UPF0354 protein BcerKBAB4_4524 (Bacillus mycoides (strain KBAB4) (Bacillus weihenstephanensis)).